The following is a 430-amino-acid chain: MLDSLDLVIDTIVAREVLDSRGNPTVEAEVLLEGGASGRAIVPSGASTGAHEAHELRDGGDRYMGKGVTKAVDHIEERIAPALCGLSALDQGSVDAAMLELDGSDNKSGLGANAILAVSMATARAAANGLGLPLYRYLGGPMATLLPVPLMNVINGGAHAANNLDFQEFMLVPHGAPNFREALRMGTEVFHTLKNLLSERGMSTSVGDEGGFAPDLGNEEAGEVLVQAIEKAGYKPGEQISLALDVASTEFYSDGRYAFSGGSYSSAEMVDQLEQLVNRFPIISIEDGLAEDDWEGWALLTERLGKRVQLVGDDLFVTNTKRLQRGIDANTANSILIKVNQIGSLTETLQAIDLAGRSGYTSVISHRSGETEDTTIADLAVATRAGQIKTGSLSRSERVAKYNQLLRIEDELGDQAVYAGATGQGPRGRD.

Glutamine 167 contacts (2R)-2-phosphoglycerate. Glutamate 209 (proton donor) is an active-site residue. Residues aspartate 245, glutamate 286, and aspartate 313 each coordinate Mg(2+). Lysine 338, arginine 367, serine 368, and lysine 389 together coordinate (2R)-2-phosphoglycerate. The active-site Proton acceptor is the lysine 338.

It belongs to the enolase family. Requires Mg(2+) as cofactor.

The protein localises to the cytoplasm. It localises to the secreted. The protein resides in the cell surface. The catalysed reaction is (2R)-2-phosphoglycerate = phosphoenolpyruvate + H2O. Its pathway is carbohydrate degradation; glycolysis; pyruvate from D-glyceraldehyde 3-phosphate: step 4/5. In terms of biological role, catalyzes the reversible conversion of 2-phosphoglycerate (2-PG) into phosphoenolpyruvate (PEP). It is essential for the degradation of carbohydrates via glycolysis. The sequence is that of Enolase from Synechococcus sp. (strain CC9311).